The sequence spans 419 residues: UDP-N-acetylglucosamine 1-carboxyvinyltransferase 2 (419 aa).

A phosphoenolpyruvate-binding site is contributed by 24–25 (KN). Arginine 94 serves as a coordination point for UDP-N-acetyl-alpha-D-glucosamine. Cysteine 118 serves as the catalytic Proton donor. Cysteine 118 is modified (2-(S-cysteinyl)pyruvic acid O-phosphothioketal). UDP-N-acetyl-alpha-D-glucosamine is bound by residues 123-127 (RPIDQ), aspartate 307, and isoleucine 329.

The protein belongs to the EPSP synthase family. MurA subfamily.

It localises to the cytoplasm. It carries out the reaction phosphoenolpyruvate + UDP-N-acetyl-alpha-D-glucosamine = UDP-N-acetyl-3-O-(1-carboxyvinyl)-alpha-D-glucosamine + phosphate. Its pathway is cell wall biogenesis; peptidoglycan biosynthesis. In terms of biological role, cell wall formation. Adds enolpyruvyl to UDP-N-acetylglucosamine. The protein is UDP-N-acetylglucosamine 1-carboxyvinyltransferase 2 of Staphylococcus epidermidis (strain ATCC 35984 / DSM 28319 / BCRC 17069 / CCUG 31568 / BM 3577 / RP62A).